The following is a 227-amino-acid chain: Phosphatidate cytidylyltransferase (227 aa).

The next 6 helical transmembrane spans lie at 31–51 (FVIAILWFKPLFYILMILVGM), 65–85 (IPYLLIGLIIIPIPISLLTFL), 93–113 (WLIMLYFCIIWSVDSFAMIGG), 131–151 (WSGLVTGVLSAGLVAVLASFI), 165–185 (IYLFIISCILALIAQSSDLFI), and 206–226 (GVLDRFDSIILTAPVLFFISI).

The protein belongs to the CDS family.

The protein resides in the cell membrane. The catalysed reaction is a 1,2-diacyl-sn-glycero-3-phosphate + CTP + H(+) = a CDP-1,2-diacyl-sn-glycerol + diphosphate. Its pathway is phospholipid metabolism; CDP-diacylglycerol biosynthesis; CDP-diacylglycerol from sn-glycerol 3-phosphate: step 3/3. This Rickettsia felis (strain ATCC VR-1525 / URRWXCal2) (Rickettsia azadi) protein is Phosphatidate cytidylyltransferase (cdsA).